We begin with the raw amino-acid sequence, 55 residues long: Large ribosomal subunit protein bL33 (55 aa).

This sequence belongs to the bacterial ribosomal protein bL33 family.

The chain is Large ribosomal subunit protein bL33 from Acidiphilium cryptum (strain JF-5).